Here is a 141-residue protein sequence, read N- to C-terminus: Nucleoside diphosphate kinase (141 aa).

Lysine 11, phenylalanine 59, arginine 87, threonine 93, arginine 104, and asparagine 114 together coordinate ATP. The active-site Pros-phosphohistidine intermediate is the histidine 117.

Belongs to the NDK family. Homotetramer. Mg(2+) is required as a cofactor.

The protein resides in the cytoplasm. It catalyses the reaction a 2'-deoxyribonucleoside 5'-diphosphate + ATP = a 2'-deoxyribonucleoside 5'-triphosphate + ADP. The catalysed reaction is a ribonucleoside 5'-diphosphate + ATP = a ribonucleoside 5'-triphosphate + ADP. In terms of biological role, major role in the synthesis of nucleoside triphosphates other than ATP. The ATP gamma phosphate is transferred to the NDP beta phosphate via a ping-pong mechanism, using a phosphorylated active-site intermediate. The protein is Nucleoside diphosphate kinase of Cupriavidus pinatubonensis (strain JMP 134 / LMG 1197) (Cupriavidus necator (strain JMP 134)).